The chain runs to 340 residues: DNA-directed RNA polymerase subunit alpha (340 aa).

Positions 1-233 (MYRNWRDLIS…EQLSIFINFD (233 aa)) are alpha N-terminal domain (alpha-NTD). The tract at residues 251 to 340 (INENLYRSVD…RLRGERKDEE (90 aa)) is alpha C-terminal domain (alpha-CTD).

It belongs to the RNA polymerase alpha chain family. In terms of assembly, homodimer. The RNAP catalytic core consists of 2 alpha, 1 beta, 1 beta' and 1 omega subunit. When a sigma factor is associated with the core the holoenzyme is formed, which can initiate transcription.

It carries out the reaction RNA(n) + a ribonucleoside 5'-triphosphate = RNA(n+1) + diphosphate. DNA-dependent RNA polymerase catalyzes the transcription of DNA into RNA using the four ribonucleoside triphosphates as substrates. This chain is DNA-directed RNA polymerase subunit alpha, found in Geobacter sulfurreducens (strain ATCC 51573 / DSM 12127 / PCA).